Here is a 152-residue protein sequence, read N- to C-terminus: Large ribosomal subunit protein uL13 (152 aa).

Positions 130 to 152 (HPHEAQSPEVLDLASKNPKNTRS) are disordered.

This sequence belongs to the universal ribosomal protein uL13 family. In terms of assembly, part of the 50S ribosomal subunit.

This protein is one of the early assembly proteins of the 50S ribosomal subunit, although it is not seen to bind rRNA by itself. It is important during the early stages of 50S assembly. This is Large ribosomal subunit protein uL13 from Dinoroseobacter shibae (strain DSM 16493 / NCIMB 14021 / DFL 12).